Consider the following 573-residue polypeptide: ATP-dependent RNA helicase RhlB (573 aa).

The short motif at 9-37 is the Q motif element; that stretch reads VTFSSFDLHPALIAGLESAGFTRCTPIQA. The Helicase ATP-binding domain occupies 40–220; the sequence is LPVALPGGDV…YEHMNEPEKL (181 aa). 53–60 provides a ligand contact to ATP; sequence AQTGTGKT. Residues 166–169 carry the DEAD box motif; sequence DEAD. The Helicase C-terminal domain occupies 231 to 393; sequence RVRQRIYFPS…PVTSELLTPL (163 aa). Residues 391–560 form a disordered region; the sequence is TPLPRAPRVP…KPSGSPSLLS (170 aa). Residues 402-411 are compositionally biased toward acidic residues; sequence EGEEADDDAG. Residues 419-432 are compositionally biased toward basic and acidic residues; that stretch reads REAREQRAAEEQRR. The segment covering 435-450 has biased composition (gly residues); sequence GRSGSGGSRSGSGGGG. Over residues 451 to 462 the composition is skewed to basic and acidic residues; sequence GRREGAGADGKP. Over residues 484–499 the composition is skewed to low complexity; sequence PVVAAAAGQAPSAGVA. Residues 505 to 514 show a composition bias toward basic residues; sequence PRKRRRRRNG. The span at 541–560 shows a compositional bias: low complexity; sequence VVAKPVRAAAKPSGSPSLLS.

It belongs to the DEAD box helicase family. RhlB subfamily. In terms of assembly, component of the RNA degradosome, which is a multiprotein complex involved in RNA processing and mRNA degradation.

The protein resides in the cytoplasm. It catalyses the reaction ATP + H2O = ADP + phosphate + H(+). Functionally, DEAD-box RNA helicase involved in RNA degradation. Has RNA-dependent ATPase activity and unwinds double-stranded RNA. This Xanthomonas euvesicatoria pv. vesicatoria (strain 85-10) (Xanthomonas campestris pv. vesicatoria) protein is ATP-dependent RNA helicase RhlB.